The following is a 304-amino-acid chain: Small glutamine-rich tetratricopeptide repeat-containing protein beta (304 aa).

TPR repeat units follow at residues 15–49 (LREQSQMDAYTSDEQESLEVAIQCLETVFKISPED), 85–118 (ADQLKDEGNNHMKEENYAAAVDCYTQAIELDPNN), 120–152 (VYYCNRAAAQSKLSHYTDAIKDCEKAIAIDSKY), and 153–186 (SKAYGRMGLALTAMNKFEEAVTSYQKALDLDPEN). N6-acetyllysine is present on lysine 131. Residues serine 293, serine 295, and serine 297 each carry the phosphoserine modification.

Belongs to the SGT family. As to quaternary structure, homooligomerize.

Co-chaperone that binds directly to HSC70 and HSP70 and regulates their ATPase activity. In Mus musculus (Mouse), this protein is Small glutamine-rich tetratricopeptide repeat-containing protein beta (Sgtb).